Reading from the N-terminus, the 506-residue chain is ATP synthase subunit alpha (506 aa).

170–177 contributes to the ATP binding site; the sequence is GDRQTGKT.

This sequence belongs to the ATPase alpha/beta chains family. In terms of assembly, F-type ATPases have 2 components, CF(1) - the catalytic core - and CF(0) - the membrane proton channel. CF(1) has five subunits: alpha(3), beta(3), gamma(1), delta(1), epsilon(1). CF(0) has four main subunits: a(1), b(1), b'(1) and c(9-12).

It is found in the cellular thylakoid membrane. The enzyme catalyses ATP + H2O + 4 H(+)(in) = ADP + phosphate + 5 H(+)(out). Its function is as follows. Produces ATP from ADP in the presence of a proton gradient across the membrane. The alpha chain is a regulatory subunit. The sequence is that of ATP synthase subunit alpha from Synechococcus sp. (strain CC9902).